The following is a 257-amino-acid chain: Acetylglutamate kinase (257 aa).

Residues Gly43–Gly44, Arg65, and Asn157 contribute to the substrate site. Residues Asp180–Leu185 and Ile208–Thr210 contribute to the ATP site.

This sequence belongs to the acetylglutamate kinase family. ArgB subfamily. Homodimer.

The protein localises to the cytoplasm. It catalyses the reaction N-acetyl-L-glutamate + ATP = N-acetyl-L-glutamyl 5-phosphate + ADP. It functions in the pathway amino-acid biosynthesis; L-arginine biosynthesis; N(2)-acetyl-L-ornithine from L-glutamate: step 2/4. In terms of biological role, catalyzes the ATP-dependent phosphorylation of N-acetyl-L-glutamate. The polypeptide is Acetylglutamate kinase (Escherichia coli O139:H28 (strain E24377A / ETEC)).